A 139-amino-acid polypeptide reads, in one-letter code: Transcription antitermination protein NusB (139 aa).

This sequence belongs to the NusB family.

Functionally, involved in transcription antitermination. Required for transcription of ribosomal RNA (rRNA) genes. Binds specifically to the boxA antiterminator sequence of the ribosomal RNA (rrn) operons. This chain is Transcription antitermination protein NusB, found in Escherichia fergusonii (strain ATCC 35469 / DSM 13698 / CCUG 18766 / IAM 14443 / JCM 21226 / LMG 7866 / NBRC 102419 / NCTC 12128 / CDC 0568-73).